The chain runs to 942 residues: NBPF family member NBPF8 (942 aa).

The stretch at 89–130 (AEELRQYKVLVHSQERELTQLKEKLQEGRDASRSLNEHLQAL) forms a coiled coil. The segment at 161 to 203 (KLSPENDEDEDEDVQVEEDEKVQKSSAPREVQKAEESKVPEDS) is disordered. Residues 165 to 180 (ENDEDEDEDVQVEEDE) are compositionally biased toward acidic residues. An Olduvai 1 domain is found at 165–259 (ENDEDEDEDV…ECQDALNILS (95 aa)). Positions 190–201 (EVQKAEESKVPE) are enriched in basic and acidic residues. Residues 339-401 (KSMLRNERQF…LSLNEHLQAL (63 aa)) adopt a coiled-coil conformation. 6 Olduvai domains span residues 436 to 528 (ENDN…HIIP), 529 to 617 (ENES…ATGP), 620 to 675 (SREL…VDMD), 676 to 767 (EIEK…PPCP), 770 to 843 (SREL…RSKK), and 844 to 904 (KRRR…RSVF). 2 disordered regions span residues 451–474 (EKVQKSSAPREMQKAEEKEVPEDS) and 528–566 (PENESDDEEEEEKGPVSPRNLQESEEEEVPQESWDEGYS). Acidic residues-rich tracts occupy residues 530-539 (NESDDEEEEE) and 550-562 (ESEEEEVPQESWD). Residues 831 to 849 (GKGKIRRGRRSKKKRRRGR) show a composition bias toward basic residues. The disordered stretch occupies residues 831–863 (GKGKIRRGRRSKKKRRRGRKEGEEDQNPPCPRL).

This sequence belongs to the NBPF family. In terms of tissue distribution, expressed in the mammary gland.

The protein resides in the cytoplasm. The protein is NBPF family member NBPF8 of Homo sapiens (Human).